The following is a 463-amino-acid chain: Cytidylate cyclase (463 aa).

A Guanylate cyclase domain is found at 122–231 (VTMFMDIIGS…IGIRIGIDLG (110 aa)). Phe-125 serves as a coordination point for a ribonucleoside 5'-triphosphate. Mn(2+) is bound by residues Asp-127, Ile-128, and Asp-171. The AGS-C domain stretch occupies residues 334 to 454 (KPSRIKVVIS…VISNDTVIER (121 aa)).

The protein belongs to the adenylyl cyclase class-4/guanylyl cyclase family. Pyrimidine cyclase subfamily. Homodimer. It depends on Mn(2+) as a cofactor.

It localises to the cytoplasm. The catalysed reaction is CTP = 3',5'-cyclic CMP + diphosphate. Its function is as follows. Pycsar (pyrimidine cyclase system for antiphage resistance) provides immunity against bacteriophage. The pyrimidine cyclase (PycC) synthesizes cyclic nucleotides in response to infection; these serve as specific second messenger signals. The signal activates the adjacent effector, leading to bacterial cell death and abortive phage infection. A clade E Pycsar system. Functionally, the pyrimidine cyclase gene of a two-gene Pycsar system, generates cyclic CMP (cCMP) from CTP in response to bacteriophage infection. Has little to no activity on ATP, GTP or UTP. Expression of this and adjacent effector Ec303145PycTM (AC P0DV27) confers resistance to bacteriophage P1, T5, lambda-vir and phi27. This is Cytidylate cyclase from Escherichia coli.